The primary structure comprises 359 residues: Prostaglandin F2-alpha receptor (359 aa).

Topologically, residues 1–31 are extracellular; that stretch reads MSMNNSKQLVSPAAALLSNTTCQTENRLSVF. 2 N-linked (GlcNAc...) asparagine glycosylation sites follow: Asn-4 and Asn-19. Residues 32–54 form a helical membrane-spanning segment; it reads FSVIFMTVGILSNSLAIAILMKA. Topologically, residues 55-69 are cytoplasmic; that stretch reads YQRFRQKSKASFLLL. The chain crosses the membrane as a helical span at residues 70 to 90; the sequence is ASGLVITDFFGHLINGAIAVF. Residues 91–109 are Extracellular-facing; it reads VYASDKEWIRFDQSNVLCS. A disulfide bridge connects residues Cys-108 and Cys-186. A helical transmembrane segment spans residues 110–131; that stretch reads IFGICMVFSGLCPLLLGSVMAI. Topologically, residues 132–152 are cytoplasmic; the sequence is ERCIGVTKPIFHSTKITSKHV. Residues 153–175 form a helical membrane-spanning segment; that stretch reads KMMLSGVCLFAVFIALLPILGHR. The Extracellular portion of the chain corresponds to 176–198; sequence DYKIQASRTWCFYNTEDIKDWED. The helical transmembrane segment at 199–224 threads the bilayer; that stretch reads RFYLLLFSFLGLLALGVSLLCNAITG. The Cytoplasmic portion of the chain corresponds to 225-250; it reads ITLLRVKFKSQQHRQGRSHHLEMVIQ. A helical transmembrane segment spans residues 251 to 267; sequence LLAIMCVSCICWSPFLV. The Extracellular segment spans residues 268–285; it reads TMANIGINGNHSLETCET. The chain crosses the membrane as a helical span at residues 286–307; the sequence is TLFALRMATWNQILDPWVYILL. Over 308–359 the chain is Cytoplasmic; sequence RKAVLKNLYKLASQCCGVHVISLHIWELSSIKNSLKVAAISESPVAEKSAST.

Belongs to the G-protein coupled receptor 1 family. As to quaternary structure, isoform 1 can form heterodimers with isoform 5 (and probably other isoforms). As to expression, eye.

The protein resides in the cell membrane. Functionally, receptor for prostaglandin F2-alpha (PGF2-alpha). The activity of this receptor is mediated by G proteins which activate a phosphatidylinositol-calcium second messenger system. Initiates luteolysis in the corpus luteum. Isoforms 2 to 7 do not bind PGF2-alpha but are proposed to modulate signaling by participating in variant receptor complexes; heterodimers between isoform 1 and isoform 5 are proposed to be a receptor for prostamides including the synthetic analog bimatoprost. The polypeptide is Prostaglandin F2-alpha receptor (PTGFR) (Homo sapiens (Human)).